The chain runs to 261 residues: Esterase citA (261 aa).

Catalysis depends on charge relay system residues Ser-122, Asp-207, and His-235.

Belongs to the LovG family.

It participates in mycotoxin biosynthesis. Non-reducing polyketide synthase; part of the gene cluster that mediates the biosynthesis of the mycotoxin citrinin, a hepato-nephrotoxic compound to humans due to inhibition of respiration complex III. The pathway begins with the synthesis of a keto-aldehyde intermediate by the citrinin PKS (pksCT also named citS) from successive condensations of 4 malonyl-CoA units, presumably with a simple acetyl-CoA starter unit. Release of the keto-aldehyde intermediate is consistent with the presence of the C-terminal reductive release domain. CitA collaborates with citS by catalyzing the hydrolysis of ACP-bound acyl intermediates to free the ACP from stalled intermediates. CitB then catalyzes the oxidation of the C-12 methyl of the ketone intermediate to an alcohol intermediate which is further oxidized by the oxidoreductase citC to produce a bisaldehyde intermediate. The fourth catalytic step is catalyzed by the citD aldehyde dehydrogenase. The final transformation is the reduction of C-3 by citE to provide the chemically stable citrinin nucleus. CitE appears highly selective for its substrate as its presence in any context other than a full complement of citS and citA-D does not result in observable new compounds. The protein is Esterase citA of Monascus ruber (Mold).